Consider the following 206-residue polypeptide: Protein GrpE (206 aa).

A compositionally biased stretch (basic and acidic residues) spans 1 to 14; the sequence is MDKKNEQQEVREEN. Positions 1–56 are disordered; it reads MDKKNEQQEVREENDTSINQESETQVELEEEVVNEECETSSEKTDEKEVDDENVTD. Over residues 24–39 the composition is skewed to acidic residues; it reads TQVELEEEVVNEECET.

It belongs to the GrpE family. In terms of assembly, homodimer.

The protein resides in the cytoplasm. In terms of biological role, participates actively in the response to hyperosmotic and heat shock by preventing the aggregation of stress-denatured proteins, in association with DnaK and GrpE. It is the nucleotide exchange factor for DnaK and may function as a thermosensor. Unfolded proteins bind initially to DnaJ; upon interaction with the DnaJ-bound protein, DnaK hydrolyzes its bound ATP, resulting in the formation of a stable complex. GrpE releases ADP from DnaK; ATP binding to DnaK triggers the release of the substrate protein, thus completing the reaction cycle. Several rounds of ATP-dependent interactions between DnaJ, DnaK and GrpE are required for fully efficient folding. This is Protein GrpE from Clostridioides difficile (strain 630) (Peptoclostridium difficile).